The sequence spans 333 residues: Biotin synthase (333 aa).

Positions 51 to 278 constitute a Radical SAM core domain; sequence RAIQLSTLMS…KSYVRLSAGR (228 aa). Residues cysteine 66, cysteine 70, and cysteine 73 each coordinate [4Fe-4S] cluster. [2Fe-2S] cluster contacts are provided by cysteine 110, cysteine 141, cysteine 201, and arginine 273.

Belongs to the radical SAM superfamily. Biotin synthase family. As to quaternary structure, homodimer. Requires [4Fe-4S] cluster as cofactor. [2Fe-2S] cluster is required as a cofactor.

It catalyses the reaction (4R,5S)-dethiobiotin + (sulfur carrier)-SH + 2 reduced [2Fe-2S]-[ferredoxin] + 2 S-adenosyl-L-methionine = (sulfur carrier)-H + biotin + 2 5'-deoxyadenosine + 2 L-methionine + 2 oxidized [2Fe-2S]-[ferredoxin]. It participates in cofactor biosynthesis; biotin biosynthesis; biotin from 7,8-diaminononanoate: step 2/2. Functionally, catalyzes the conversion of dethiobiotin (DTB) to biotin by the insertion of a sulfur atom into dethiobiotin via a radical-based mechanism. The protein is Biotin synthase of Haemophilus influenzae (strain 86-028NP).